We begin with the raw amino-acid sequence, 136 residues long: MEGDAPVIAANPLEKNTDPMVALQKVIKESLAVQGVARGLHETVKALDKRTARLCVLASNCDEPNFVRLVKALATEHNIPLIEVPDNKALGEWAGLCKLDKDLAARKVVACSTLVIKTFGKESDDYKFLMEYISKQ.

It belongs to the eukaryotic ribosomal protein eS12 family.

The polypeptide is Small ribosomal subunit protein eS12 (rps12) (Dictyostelium discoideum (Social amoeba)).